An 862-amino-acid polypeptide reads, in one-letter code: Ecdysone-induced protein 78C (862 aa).

4 disordered regions span residues 28-83 (SSEQ…EEAL), 97-138 (LHFF…KQHH), 173-210 (ASLSPQQQQQRQHTHQQQQQQQQQQQHPGQQQHQLNCT), and 230-353 (ASNH…NNNN). A compositionally biased stretch (basic and acidic residues) spans 37 to 46 (KQEDLIKDFT). Residues 47 to 82 (RDEEEQPSEEEAEEEDNEEDEEEEGEEEEEDEDEEA) show a composition bias toward acidic residues. Residues 105-119 (DSSTQGAYSEANSLE) are compositionally biased toward polar residues. Composition is skewed to low complexity over residues 173–206 (ASLSPQQQQQRQHTHQQQQQQQQQQQHPGQQQHQ), 230–291 (ASNH…NNSV), 308–335 (QQQQPLPTTQLQQQQQHQQQLQHPQQQQ), and 342–353 (SSSSNGSSNNNN). Residues 360–435 (FVPCKVCGDK…AGMSRDSVRY (76 aa)) constitute a DNA-binding region (nuclear receptor). 2 consecutive NR C4-type zinc fingers follow at residues 363 to 383 (CKVCGDKASGYHYGVTSCEGC) and 399 to 418 (CLRDGKCLVIRLNRNRCQYC). Residues 444 to 557 (ELNGAAASSA…NNNSSSGNAS (114 aa)) form a disordered region. Positions 447 to 460 (GAAASSAAAGAPAS) are enriched in low complexity. Positions 463 to 472 (VDDSTSSTLH) are enriched in polar residues. Residues 475–508 (HLQQQQQQHLLQQQQQQQHQPQLQQHHQLQQQPH) are compositionally biased toward low complexity. The span at 516-533 (TPSTPQTPQMCSIASSPS) shows a compositional bias: polar residues. A compositionally biased stretch (low complexity) spans 539-555 (NSANNNNNNNNNSSSGN). One can recognise an NR LBD domain in the interval 626–855 (YTEELTRELM…PPLFAEIFDI (230 aa)).

It belongs to the nuclear hormone receptor family. NR1 subfamily.

The protein localises to the nucleus. Induces the early late puff 78C which triggers puparium formation and development. This chain is Ecdysone-induced protein 78C (Eip78C), found in Drosophila melanogaster (Fruit fly).